We begin with the raw amino-acid sequence, 74 residues long: uncharacterized protein (74 aa).

This is an uncharacterized protein from Sinorhizobium fredii (strain NBRC 101917 / NGR234).